The chain runs to 254 residues: Imidazole glycerol phosphate synthase subunit HisF (254 aa).

Residues Asp-11 and Asp-130 contribute to the active site.

Belongs to the HisA/HisF family. Heterodimer of HisH and HisF.

The protein resides in the cytoplasm. The catalysed reaction is 5-[(5-phospho-1-deoxy-D-ribulos-1-ylimino)methylamino]-1-(5-phospho-beta-D-ribosyl)imidazole-4-carboxamide + L-glutamine = D-erythro-1-(imidazol-4-yl)glycerol 3-phosphate + 5-amino-1-(5-phospho-beta-D-ribosyl)imidazole-4-carboxamide + L-glutamate + H(+). Its pathway is amino-acid biosynthesis; L-histidine biosynthesis; L-histidine from 5-phospho-alpha-D-ribose 1-diphosphate: step 5/9. Functionally, IGPS catalyzes the conversion of PRFAR and glutamine to IGP, AICAR and glutamate. The HisF subunit catalyzes the cyclization activity that produces IGP and AICAR from PRFAR using the ammonia provided by the HisH subunit. The sequence is that of Imidazole glycerol phosphate synthase subunit HisF from Oceanobacillus iheyensis (strain DSM 14371 / CIP 107618 / JCM 11309 / KCTC 3954 / HTE831).